We begin with the raw amino-acid sequence, 174 residues long: Large ribosomal subunit protein uL10 (174 aa).

Belongs to the universal ribosomal protein uL10 family. In terms of assembly, part of the ribosomal stalk of the 50S ribosomal subunit. The N-terminus interacts with L11 and the large rRNA to form the base of the stalk. The C-terminus forms an elongated spine to which L12 dimers bind in a sequential fashion forming a multimeric L10(L12)X complex.

Functionally, forms part of the ribosomal stalk, playing a central role in the interaction of the ribosome with GTP-bound translation factors. In Geobacter sulfurreducens (strain ATCC 51573 / DSM 12127 / PCA), this protein is Large ribosomal subunit protein uL10.